Consider the following 396-residue polypeptide: Tryptophan synthase beta chain (396 aa).

K86 is modified (N6-(pyridoxal phosphate)lysine).

It belongs to the TrpB family. Tetramer of two alpha and two beta chains. Pyridoxal 5'-phosphate serves as cofactor.

It carries out the reaction (1S,2R)-1-C-(indol-3-yl)glycerol 3-phosphate + L-serine = D-glyceraldehyde 3-phosphate + L-tryptophan + H2O. It functions in the pathway amino-acid biosynthesis; L-tryptophan biosynthesis; L-tryptophan from chorismate: step 5/5. In terms of biological role, the beta subunit is responsible for the synthesis of L-tryptophan from indole and L-serine. The protein is Tryptophan synthase beta chain of Sodalis glossinidius (strain morsitans).